Here is a 119-residue protein sequence, read N- to C-terminus: UPF0102 protein Nmul_A0195 (119 aa).

This sequence belongs to the UPF0102 family.

The polypeptide is UPF0102 protein Nmul_A0195 (Nitrosospira multiformis (strain ATCC 25196 / NCIMB 11849 / C 71)).